Consider the following 122-residue polypeptide: ORF7a protein (122 aa).

The N-terminal stretch at 1 to 15 (MKIILFLTLIVFTSC) is a signal peptide. Residues 16–81 (ELYHYQECVR…RHTYQLRARS (66 aa)) enclose the X4e domain. Topologically, residues 16–96 (ELYHYQECVR…FIRQEEVQQE (81 aa)) are virion surface. 2 disulfide bridges follow: Cys23–Cys58 and Cys35–Cys67. A helical transmembrane segment spans residues 97–117 (LYSPLFLIVAALVFLILCFTI). Residues 118–122 (KRKTE) lie on the Intravirion side of the membrane. A Di-lysine motif motif is present at residues 118 to 122 (KRKTE).

As to quaternary structure, interacts with the spike glycoprotein. Interacts with M protein. Interacts with E protein. Interacts with the ORF3a protein. Interacts with human SGT. Interacts with host ITGAL. Interacts with host BST2.

It localises to the virion. Its subcellular location is the host endoplasmic reticulum membrane. The protein localises to the host endoplasmic reticulum-Golgi intermediate compartment membrane. It is found in the host Golgi apparatus membrane. Functionally, plays a role as antagonist of host tetherin (BST2), disrupting its antiviral effect. Acts by binding to BST2 thereby interfering with its glycosylation. May suppress small interfering RNA (siRNA). May bind to host ITGAL, thereby playing a role in attachment or modulation of leukocytes. The chain is ORF7a protein from Severe acute respiratory syndrome coronavirus (SARS-CoV).